Reading from the N-terminus, the 1096-residue chain is Lysine-specific demethylase PHF2 (1096 aa).

A PHD-type zinc finger spans residues 5–56 (PVYCVCRLPYDVTRFMIECDACKDWFHGSCVGVEEEEAPDIDIYHCPNCEKT). Residues T193 and T246 each contribute to the 2-oxoglutarate site. The 157-residue stretch at 197-353 (FSDTRMSSFV…MQMRAYEVER (157 aa)) folds into the JmjC domain. Residues H249 and D251 each contribute to the Fe cation site. 4 residues coordinate 2-oxoglutarate: Y259, K266, Y321, and T323. A Fe cation-binding site is contributed by Y321. Disordered stretches follow at residues 447-634 (KAVR…KDNK) and 646-674 (GSKALRPPTSPGVFGALQNFKEDKPKPVR). S474 carries the post-translational modification Phosphoserine. T479 carries the phosphothreonine modification. The segment covering 503-518 (SKIPKPPKPPKPPRPP) has biased composition (pro residues). Phosphoserine is present on S539. 2 stretches are compositionally biased toward basic and acidic residues: residues 548-563 (LEAHTKEALTKMEPPK) and 578-624 (DVVH…KLEK). Residue S655 is modified to Phosphoserine. Basic and acidic residues predominate over residues 665 to 674 (FKEDKPKPVR). A phosphoserine mark is found at S681 and S705. Residue K711 forms a Glycyl lysine isopeptide (Lys-Gly) (interchain with G-Cter in SUMO2) linkage. Disordered regions lie at residues 719–799 (TKPK…QGML), 817–846 (AGQAKGSSLAAHGARKNGGGSGKSAGKRLL), and 877–1078 (YPSL…MATA). Residue K720 is modified to N6-acetyllysine. Position 728 is a phosphotyrosine (Y728). The segment covering 729–757 (KSDDSSDEGSLHIDTDTKPGRNARVKKES) has biased composition (basic and acidic residues). 4 positions are modified to phosphoserine: S730, S733, S734, and S738. Phosphoserine occurs at positions 879, 882, and 899. Residues 916–925 (RQDRPVREGT) show a composition bias toward basic and acidic residues. Residues 949–959 (SKKKKSAKRKL) are compositionally biased toward basic residues. Low complexity-rich tracts occupy residues 960 to 1009 (TPNT…EGSS) and 1027 to 1040 (TAAGTFTGAQAGRT). Polar residues predominate over residues 1053–1065 (RRPSASSPNNNTA). The residue at position 1056 (S1056) is a Phosphoserine; by PKA.

Belongs to the JHDM1 histone demethylase family. JHDM1D subfamily. Component of the PHF2-ARID5B complex, at least composed of PHF2 and ARID5B. Interacts with HNF4A and NR1H4. Interacts with RELA. In terms of processing, phosphorylated by PKA on specific serine residues, leading to the formation of an active lysine demethylase complex. Widely expressed, including in liver (at protein level).

The protein localises to the nucleus. The protein resides in the nucleolus. It localises to the chromosome. It is found in the centromere. Its subcellular location is the kinetochore. It carries out the reaction N(6),N(6)-dimethyl-L-lysyl(9)-[histone H3] + 2-oxoglutarate + O2 = N(6)-methyl-L-lysyl(9)-[histone H3] + formaldehyde + succinate + CO2. Enzymatically inactive by itself, and become active following phosphorylation by PKA. Lysine demethylase that demethylates both histones and non-histone proteins. Enzymatically inactive by itself, and becomes active following phosphorylation by PKA: forms a complex with ARID5B and mediates demethylation of methylated ARID5B. Demethylation of ARID5B leads to target the PHF2-ARID5B complex to target promoters, where PHF2 mediates demethylation of dimethylated 'Lys-9' of histone H3 (H3K9me2), followed by transcription activation of target genes. The PHF2-ARID5B complex acts as a coactivator of HNF4A in liver. PHF2 is recruited to trimethylated 'Lys-4' of histone H3 (H3K4me3) at rDNA promoters and promotes expression of rDNA. Involved in the activation of toll-like receptor 4 (TLR4)-target inflammatory genes in macrophages by catalyzing the demethylation of trimethylated histone H4 lysine 20 (H4K20me3) at the gene promoters. In Homo sapiens (Human), this protein is Lysine-specific demethylase PHF2.